The sequence spans 85 residues: uncharacterized protein (85 aa).

This sequence belongs to the ycf76 family.

Its subcellular location is the plastid. It is found in the chloroplast. This is an uncharacterized protein from Saccharum hybrid (Sugarcane).